Here is a 1337-residue protein sequence, read N- to C-terminus: ABC transporter D family member 1 (1337 aa).

The next 4 helical transmembrane spans lie at 24-44 (ILLAAGIVAAGGTAVYLKSRV), 142-162 (APLFLRLISENIMLCFMLSTL), 247-267 (YASPKYIFWILAYVLGAGTAI), and 342-362 (FLLKYLGATVAVILIIEPFFS). One can recognise an ABC transmembrane type-1 1 domain in the interval 117–395 (VFRTALSNRL…SVIISLFQAL (279 aa)). Residues 448–695 (VEFSDVKVVT…DAMVVQRAFA (248 aa)) form the ABC transporter 1 domain. 481 to 488 (GPNGSGKS) contacts ATP. Residues 751–1049 (LIPTIFDKQG…VVSQSFMAFG (299 aa)) form the ABC transmembrane type-1 2 domain. Residues 900 to 920 (LLTGQRGVAILYTYMLLGLGF) traverse the membrane as a helical segment. The 247-residue stretch at 1091–1337 (LDSQDLLSFS…ELRSIEQTTE (247 aa)) folds into the ABC transporter 2 domain. Residue 1130-1137 (GPNGSGKT) coordinates ATP.

This sequence belongs to the ABC transporter superfamily. ABCD family. Peroxisomal fatty acyl CoA transporter (TC 3.A.1.203) subfamily.

The protein localises to the peroxisome membrane. It is found in the glyoxysome membrane. It carries out the reaction an acyl-CoA(out) + ATP + H2O = an acyl-CoA(in) + ADP + phosphate + H(+). Contributes to the transport of fatty acids and their derivatives (acyl CoAs) across the peroxisomal membrane. Provides acetate to the glyoxylate cycle in developing seedlings. Involved in pollen tube elongation, ovule fertilization, and seeds germination after imbibition (controls the switch between the opposing developmental programs of dormancy and germination), probably by promoting beta-oxidation of storage lipids during gluconeogenesis. Required for biosynthesis of jasmonic acid and conversion of indole butyric acid to indole acetic acid. Confers sensitivity to monofluoroacetic acid (FAc), a toxic acetate analog, and to 2,4-dichlorophenoxybutyric acid (2,4-DB) and indole-3-butyric acid (IBA), two precursors of auxin after beta-oxidation. This chain is ABC transporter D family member 1, found in Arabidopsis thaliana (Mouse-ear cress).